The following is a 150-amino-acid chain: Large ribosomal subunit protein bL9 (150 aa).

It belongs to the bacterial ribosomal protein bL9 family.

In terms of biological role, binds to the 23S rRNA. This is Large ribosomal subunit protein bL9 from Variovorax paradoxus (strain S110).